Consider the following 326-residue polypeptide: Melanocortin receptor 4 (326 aa).

The segment covering 1-14 has biased composition (basic residues); the sequence is MNTSHHHGLHHSFR. The segment at 1-31 is disordered; that stretch reads MNTSHHHGLHHSFRNHSQGALPVGKPSHGDR. Residues 1-46 are Extracellular-facing; sequence MNTSHHHGLHHSFRNHSQGALPVGKPSHGDRGSASGCYEQLLISTE. Residues asparagine 2 and asparagine 15 are each glycosylated (N-linked (GlcNAc...) asparagine). A helical transmembrane segment spans residues 47-67; it reads IFLTLGLVSLLENILVIAAIV. Residues 68 to 71 are Cytoplasmic-facing; that stretch reads KNKN. Residues 72 to 92 traverse the membrane as a helical segment; sequence LHSPMYFFICSLAVADLLVSV. Residues 93–121 are Extracellular-facing; sequence SNASETVVMALITGGNLTNRESIIKNMDN. N-linked (GlcNAc...) asparagine glycans are attached at residues asparagine 94 and asparagine 108. The helical transmembrane segment at 122–142 threads the bilayer; it reads VFDSMICSSLLASIWSLLAIA. Residues 143 to 163 lie on the Cytoplasmic side of the membrane; it reads VDRYITIFYALRYHNIMTQRR. A helical transmembrane segment spans residues 164–184; it reads AGTIITCIWTFCTVSGVLFIV. Residues 185-190 are Extracellular-facing; the sequence is YSESTT. The helical transmembrane segment at 191-211 threads the bilayer; it reads VLICLISMFFTMLALMASLYV. The Cytoplasmic segment spans residues 212-246; that stretch reads HMFLLARLHMKRIAALPGNGPIWQAANMKGAITIT. Residues 247 to 267 form a helical membrane-spanning segment; it reads ILLGVFVVCWAPFFLHLILMI. Residues 268–281 lie on the Extracellular side of the membrane; it reads SCPRNPYCVCFMSH. The helical transmembrane segment at 282–302 threads the bilayer; that stretch reads FNMYLILIMCNSVIDPLIYAF. At 303–326 the chain is on the cytoplasmic side; it reads RSQEMRKTFKEICCCWYGLASLCV. Cysteine 316 is lipidated: S-palmitoyl cysteine.

It belongs to the G-protein coupled receptor 1 family. In terms of assembly, homodimer; disulfide-linked, also forms higher order oligomers. Interacts with mrap2a; decreasing ligand-sensitivity. Interacts with mrap2b; increasing ligand-sensitivity and generation of cAMP.

It localises to the cell membrane. In terms of biological role, receptor specific to the heptapeptide core common to adrenocorticotropic hormone and alpha-, beta-, and gamma-MSH. Plays a central role in energy homeostasis and somatic growth. This receptor is mediated by G proteins that stimulate adenylate cyclase (cAMP). In Danio rerio (Zebrafish), this protein is Melanocortin receptor 4 (mc4r).